A 461-amino-acid chain; its full sequence is MVRELLEKARGLSMFTAYNTNVDAIVYLNGETVQRLIDEFGAEAVKRRMEEYPREINEPLDFVARLVHALKTGKPMAVPLVNEELQAWFDSHFKYDVERMGGQAGIIANLLANLDFREVLVYTPHLAKRQAEMFVKKPNLFYPVVEGGKLVLKHPWEAYRENDPVKVNRIFEFRAGTTFRLGNETITVPFSGRFIVSARFESIRIYTEPELKPFLPEIGQRVDGAILSGYQGIKLRYSDGKDANYYLREAKKDILLLKREKDVKVHLEFASIQNRELRKKVIYNLFPLVDSVGMDEAEIAYVLSALGYDKLAERIFTYNRIEDTVLGGKILIDEMNLELLQIHTIYYIMYIAHANNPLSEAELRQSLELATTLAASRASLGDIASPDQISVGMNVPYNERGEYVKLRFEEAKRRLRTKEYKLVIIPTRLVQNPVSTVGLGDTISTGAFTSYLAMLKEKGEL.

The region spanning 1–457 (MVRELLEKAR…FTSYLAMLKE (457 aa)) is the ADPK domain. The Mg(2+) site is built by E268, E298, and D441. D441 acts as the Proton acceptor in catalysis.

The protein belongs to the carbohydrate kinase PfkC family. Mg(2+) serves as cofactor.

It localises to the cytoplasm. It carries out the reaction beta-D-fructose 6-phosphate + ADP = beta-D-fructose 1,6-bisphosphate + AMP + H(+). Its pathway is carbohydrate degradation; glycolysis. In terms of biological role, catalyzes the phosphorylation of fructose 6-phosphate to fructose 1,6-bisphosphate using ADP as the phosphate donor. The protein is ADP-specific phosphofructokinase of Thermococcus kodakarensis (strain ATCC BAA-918 / JCM 12380 / KOD1) (Pyrococcus kodakaraensis (strain KOD1)).